Here is a 618-residue protein sequence, read N- to C-terminus: Vacuolar-sorting receptor 5 (618 aa).

The first 23 residues, 1 to 23 (MSPSNKGTVLALILALTMVVVNG), serve as a signal peptide directing secretion. The Lumenal segment spans residues 24–563 (FSSRFFVEKS…IERRSGSRSR (540 aa)). Residues 58 to 164 (KYGGFMIGSV…SFGDSLKKAL (107 aa)) form the PA domain. Residues N81, N293, and N430 are each glycosylated (N-linked (GlcNAc...) asparagine). EGF-like domains follow at residues 412-462 (ETNE…TSCK) and 465-511 (GPAR…LKCE). 7 disulfide bridges follow: C416/C434, C423/C443, C445/C461, C469/C489, C476/C497, C499/C510, and C540/C553. Residues 512–554 (DIDECKEKSACKCDGCKCKNNWGGYECKCSNNSIYMKEEDTCI) enclose the EGF-like 3; calcium-binding domain. The N-linked (GlcNAc...) asparagine glycan is linked to N542. Residues 564–584 (GLFTIVVLTAIAGISLGAYIF) traverse the membrane as a helical segment. Over 585–618 (YKYHLQSYMDSEIVSIMSQYIPLDSQSINQDSFK) the chain is Cytoplasmic. Residues 604-607 (YIPL) carry the Tyrosine-based internalization motif motif.

This sequence belongs to the VSR (BP-80) family. As to expression, expressed in seedlings, roots, leaves, flowers and siliques.

Its subcellular location is the membrane. The protein localises to the golgi apparatus membrane. It localises to the cytoplasmic vesicle. The protein resides in the clathrin-coated vesicle membrane. It is found in the prevacuolar compartment membrane. Its function is as follows. Vacuolar-sorting receptor (VSR) involved in clathrin-coated vesicles sorting from Golgi apparatus to vacuoles. This Arabidopsis thaliana (Mouse-ear cress) protein is Vacuolar-sorting receptor 5 (VSR5).